The following is a 121-amino-acid chain: Large ribosomal subunit protein bL19 (121 aa).

It belongs to the bacterial ribosomal protein bL19 family.

This protein is located at the 30S-50S ribosomal subunit interface and may play a role in the structure and function of the aminoacyl-tRNA binding site. The sequence is that of Large ribosomal subunit protein bL19 from Chlorobium phaeovibrioides (strain DSM 265 / 1930) (Prosthecochloris vibrioformis (strain DSM 265)).